The sequence spans 460 residues: Heme sensor protein HssS (460 aa).

Transmembrane regions (helical) follow at residues 11 to 31 (IYTI…TNII) and 164 to 184 (IFLA…VISS). Positions 186–238 (YAIIKPIQQLKRATERLMHGNFDEVIHVTRKDEFGTLQYRFDKMRLSLKQLDD) constitute an HAMP domain. Residues 246 to 456 (NVSHEIKTPL…TFTITFKKVP (211 aa)) form the Histidine kinase domain. The residue at position 249 (His249) is a Phosphohistidine; by autocatalysis.

Post-translationally, autophosphorylated.

Its subcellular location is the cell membrane. The catalysed reaction is ATP + protein L-histidine = ADP + protein N-phospho-L-histidine.. In terms of biological role, member of the two-component regulatory system HssS/HssR involved in intracellular heme homeostasis and tempering of staphylococcal virulence. HssS functions as a heme sensor histidine kinase which is autophosphorylated at a histidine residue and transfers its phosphate group to an aspartate residue of HssR. HssR/HssS activates the expression of hrtAB, an efflux pump, in response to extracellular heme, hemin, hemoglobin or blood. In Staphylococcus saprophyticus subsp. saprophyticus (strain ATCC 15305 / DSM 20229 / NCIMB 8711 / NCTC 7292 / S-41), this protein is Heme sensor protein HssS (hssS).